A 311-amino-acid polypeptide reads, in one-letter code: GTP cyclohydrolase MptA (311 aa).

It belongs to the GTP cyclohydrolase IV family. Homodimer. It depends on Fe(2+) as a cofactor.

The catalysed reaction is GTP + H2O = 7,8-dihydroneopterin 2',3'-cyclic phosphate + formate + diphosphate + H(+). It functions in the pathway cofactor biosynthesis; 5,6,7,8-tetrahydromethanopterin biosynthesis. Its function is as follows. Converts GTP to 7,8-dihydro-D-neopterin 2',3'-cyclic phosphate, the first intermediate in the biosynthesis of coenzyme methanopterin. The chain is GTP cyclohydrolase MptA from Methanobrevibacter smithii (strain ATCC 35061 / DSM 861 / OCM 144 / PS).